The primary structure comprises 303 residues: Glutathione transport system permease protein GsiD (303 aa).

A run of 6 helical transmembrane segments spans residues 40 to 60 (AMTA…ARWI), 105 to 125 (LAAG…LGLL), 144 to 164 (LFAF…GSGI), 165 to 185 (ANVI…LVRG), 222 to 242 (IVVF…SLSF), and 266 to 286 (VIAP…VLAF). The region spanning 101–290 (AQISLAAGVF…LTVLAFNLLG (190 aa)) is the ABC transmembrane type-1 domain.

It belongs to the binding-protein-dependent transport system permease family. The complex is composed of two ATP-binding proteins (GsiA), two transmembrane proteins (GsiC and GsiD) and a solute-binding protein (GsiB).

It localises to the cell inner membrane. Functionally, part of the ABC transporter complex GsiABCD involved in glutathione import. Probably responsible for the translocation of the substrate across the membrane. The polypeptide is Glutathione transport system permease protein GsiD (Escherichia coli O6:K15:H31 (strain 536 / UPEC)).